Reading from the N-terminus, the 310-residue chain is Ribosomal RNA small subunit methyltransferase H (310 aa).

S-adenosyl-L-methionine contacts are provided by residues 33–35 (GGH), Asp52, Phe79, Asp98, and Gln105.

The protein belongs to the methyltransferase superfamily. RsmH family.

The protein resides in the cytoplasm. The catalysed reaction is cytidine(1402) in 16S rRNA + S-adenosyl-L-methionine = N(4)-methylcytidine(1402) in 16S rRNA + S-adenosyl-L-homocysteine + H(+). Functionally, specifically methylates the N4 position of cytidine in position 1402 (C1402) of 16S rRNA. The protein is Ribosomal RNA small subunit methyltransferase H of Campylobacter jejuni subsp. jejuni serotype O:23/36 (strain 81-176).